A 1042-amino-acid chain; its full sequence is Aldehyde reductase lnaA (1042 aa).

The adenylation (A) domain stretch occupies residues 29–425 (HAFLNPSAMA…GRRDHQVKVR (397 aa)). The region spanning 532 to 609 (DNEDSTRGKL…RLAGILEERI (78 aa)) is the Carrier domain. Ser569 carries the post-translational modification O-(pantetheine 4'-phosphoryl)serine. Positions 655–897 (LTGATGFVGS…FVPVDYVNAV (243 aa)) are short-chain dehydrogenase/reductase (R) domain.

It belongs to the NRP synthetase family.

It carries out the reaction L-tyrosinal + AMP + diphosphate + NADP(+) = L-tyrosine + ATP + NADPH + H(+). It participates in secondary metabolite biosynthesis. Its function is as follows. Non-canonical nonribosomal peptide synthetase; part of the lna gene cluster that mediates the biosynthesis of diastereomeric piperazines. Lna and lnb clusters encode sets of enzymes that produce overlapping sets of previously undescribed metabolites such as piperazinomycin-like metabolites or morpholine. The lna and lnb biosynthetic pathways appear to be part of a signaling network that controls the formation of sclerotia, a resilient overwintering structure. One primary function of the non-canonical nonribosomal peptide synthetases lnaA and lnbA consists in the reduction of L-tyrosine. The presence in the clusters of tailoring enzymes such as the oxidoreductases lnaB, lnbB, lnaE or lnbE, as well as of the cytochrome P450 monooxygenases lnaC, lnaD, or lnbC, might explain formation of various diastereomeric piperazines. The protein is Aldehyde reductase lnaA of Aspergillus flavus (strain ATCC 200026 / FGSC A1120 / IAM 13836 / NRRL 3357 / JCM 12722 / SRRC 167).